A 423-amino-acid polypeptide reads, in one-letter code: UPF0229 protein PSPA7_0730 (423 aa).

The segment at Ala84–Gly107 is disordered. Gly residues predominate over residues Ser92–Lys102.

This sequence belongs to the UPF0229 family.

The sequence is that of UPF0229 protein PSPA7_0730 from Pseudomonas paraeruginosa (strain DSM 24068 / PA7) (Pseudomonas aeruginosa (strain PA7)).